Consider the following 1188-residue polypeptide: DNA-directed RNA polymerase subunit beta (1188 aa).

Belongs to the RNA polymerase beta chain family. In terms of assembly, the RNAP catalytic core consists of 2 alpha, 1 beta, 1 beta' and 1 omega subunit. When a sigma factor is associated with the core the holoenzyme is formed, which can initiate transcription.

It catalyses the reaction RNA(n) + a ribonucleoside 5'-triphosphate = RNA(n+1) + diphosphate. DNA-dependent RNA polymerase catalyzes the transcription of DNA into RNA using the four ribonucleoside triphosphates as substrates. This is DNA-directed RNA polymerase subunit beta from Streptococcus pyogenes serotype M1.